The primary structure comprises 334 residues: tRNA dimethylallyltransferase (334 aa).

23-30 (GPTGAGKT) is an ATP binding site. Position 25–30 (25–30 (TGAGKT)) interacts with substrate. 2 interaction with substrate tRNA regions span residues 53–56 (DSAL) and 177–181 (QRVQR).

The protein belongs to the IPP transferase family. As to quaternary structure, monomer. The cofactor is Mg(2+).

The enzyme catalyses adenosine(37) in tRNA + dimethylallyl diphosphate = N(6)-dimethylallyladenosine(37) in tRNA + diphosphate. Catalyzes the transfer of a dimethylallyl group onto the adenine at position 37 in tRNAs that read codons beginning with uridine, leading to the formation of N6-(dimethylallyl)adenosine (i(6)A). This Polynucleobacter necessarius subsp. necessarius (strain STIR1) protein is tRNA dimethylallyltransferase.